Reading from the N-terminus, the 332-residue chain is Casein kinase I isoform 2 (332 aa).

In terms of domain architecture, Protein kinase spans Phe-11–Phe-282. ATP contacts are provided by residues Ile-17–Ile-25 and Lys-40. The Proton acceptor role is filled by Asp-133. The segment at Glu-306 to Val-332 is disordered. Residues Gln-311 to Gln-320 show a composition bias toward low complexity. Over residues Arg-322–Val-332 the composition is skewed to basic and acidic residues.

This sequence belongs to the protein kinase superfamily. Ser/Thr protein kinase family. It depends on Mg(2+) as a cofactor.

It catalyses the reaction L-seryl-[protein] + ATP = O-phospho-L-seryl-[protein] + ADP + H(+). The catalysed reaction is L-threonyl-[protein] + ATP = O-phospho-L-threonyl-[protein] + ADP + H(+). Serine/threonine protein kinase. May phosphorylate ZC3H11 during unstressed conditions, leading to proteasome-dependent degradation of ZC3H11. The protein is Casein kinase I isoform 2 of Trypanosoma brucei brucei.